The chain runs to 272 residues: 2-C-methyl-D-erythritol 4-phosphate cytidylyltransferase (272 aa).

This sequence belongs to the IspD/TarI cytidylyltransferase family. IspD subfamily.

The enzyme catalyses 2-C-methyl-D-erythritol 4-phosphate + CTP + H(+) = 4-CDP-2-C-methyl-D-erythritol + diphosphate. Its pathway is isoprenoid biosynthesis; isopentenyl diphosphate biosynthesis via DXP pathway; isopentenyl diphosphate from 1-deoxy-D-xylulose 5-phosphate: step 2/6. Functionally, catalyzes the formation of 4-diphosphocytidyl-2-C-methyl-D-erythritol from CTP and 2-C-methyl-D-erythritol 4-phosphate (MEP). The protein is 2-C-methyl-D-erythritol 4-phosphate cytidylyltransferase of Xanthomonas oryzae pv. oryzae (strain PXO99A).